Consider the following 452-residue polypeptide: Mitochondrial distribution and morphology protein 10 (452 aa).

The protein belongs to the MDM10 family. In terms of assembly, component of the ER-mitochondria encounter structure (ERMES) or MDM complex, composed of MMM1, MDM10, MDM12 and MDM34. Associates with the mitochondrial outer membrane sorting assembly machinery SAM(core) complex.

Its subcellular location is the mitochondrion outer membrane. Its function is as follows. Component of the ERMES/MDM complex, which serves as a molecular tether to connect the endoplasmic reticulum and mitochondria. Components of this complex are involved in the control of mitochondrial shape and protein biogenesis and may function in phospholipid exchange. MDM10 is involved in the late assembly steps of the general translocase of the mitochondrial outer membrane (TOM complex). Functions in the TOM40-specific route of the assembly of outer membrane beta-barrel proteins, including the association of TOM40 with the receptor TOM22 and small TOM proteins. Can associate with the SAM(core) complex as well as the MDM12-MMM1 complex, both involved in late steps of the major beta-barrel assembly pathway, that is responsible for biogenesis of all outer membrane beta-barrel proteins. May act as a switch that shuttles between both complexes and channels precursor proteins into the TOM40-specific pathway. Plays a role in mitochondrial morphology and in the inheritance of mitochondria. The protein is Mitochondrial distribution and morphology protein 10 of Kluyveromyces lactis (strain ATCC 8585 / CBS 2359 / DSM 70799 / NBRC 1267 / NRRL Y-1140 / WM37) (Yeast).